The following is a 565-amino-acid chain: Membrane protein insertase YidC (565 aa).

Helical transmembrane passes span 6–26 (VLLIFSWLTVATLLWMDWGKN), 348–368 (LMALIGQGLFWILSHLNSLLH), 370–390 (WGWAIVGLVVLLRIAMYPLSA), 437–457 (GGCFPILIQMPIFFALYWVLV), 479–499 (PYFILPLLNIVIMWATQKLTP), and 516–536 (PLIFGVMMAFVPSGLALYWVI).

Belongs to the OXA1/ALB3/YidC family. Type 1 subfamily. In terms of assembly, interacts with the Sec translocase complex via SecD. Specifically interacts with transmembrane segments of nascent integral membrane proteins during membrane integration.

It is found in the cell inner membrane. Its function is as follows. Required for the insertion and/or proper folding and/or complex formation of integral membrane proteins into the membrane. Involved in integration of membrane proteins that insert both dependently and independently of the Sec translocase complex, as well as at least some lipoproteins. Aids folding of multispanning membrane proteins. The protein is Membrane protein insertase YidC of Xylella fastidiosa (strain 9a5c).